The primary structure comprises 1909 residues: Endoribonuclease Dicer homolog 1 (1909 aa).

Residues 99 to 177 form a disordered region; sequence TVKENGLQKN…NNKKKRECNN (79 aa). Basic and acidic residues predominate over residues 110–124; sequence GKRDEFSKEEGDKDR. Polar residues predominate over residues 131 to 146; the sequence is SYQSERSNLSGRGHVN. Over residues 147–177 the composition is skewed to basic and acidic residues; sequence NSREGDRFMNRKRTRNWDEAGNNKKKRECNN. One can recognise a Helicase ATP-binding domain in the interval 256 to 433; it reads VLEQAKAKNT…QVDCAIKIRN (178 aa). An ATP-binding site is contributed by 269-276; that stretch reads LETGAGKT. The short motif at 378-381 is the DECH box element; sequence DECH. One can recognise a Helicase C-terminal domain in the interval 651–812; the sequence is SLIKLLLKYQ…RTDLSHLKDT (162 aa). The Dicer dsRNA-binding fold domain occupies 840 to 935; sequence AVGLVHFYCS…LPDKGSGQDA (96 aa). The tract at residues 929–952 is disordered; sequence KGSGQDAEKADQDDEGEPVPGTAR. Positions 1189-1318 constitute a PAZ domain; the sequence is EVEEDLSKGK…LPPELCVVHP (130 aa). 2 RNase III domains span residues 1342 to 1518 and 1559 to 1707; these read LAVQ…VEGG and FVGL…LDSG. 3 residues coordinate Mg(2+): glutamate 1597, aspartate 1693, and glutamate 1696. DRBM domains follow at residues 1733–1796 and 1831–1906; these read HPVR…ALKE and FTRQ…LLNK. The disordered stretch occupies residues 1801 to 1831; that stretch reads ESKEKHINNGNAGEDQGENENGNKKNGHQPF.

The protein belongs to the helicase family. Dicer subfamily. As to quaternary structure, interacts (via N-terminus) with DDL. Interacts (via DRBM domains) with DRB1, DRB2 and DRB5. May interact with AGO1 or AGO10 through their common PAZ domains. It depends on Mg(2+) as a cofactor. Mn(2+) is required as a cofactor. Highly expressed in flowers and seeds and detected in leaves and stems. Found in ovule integuments, inflorescence and floral meristems, stigma of flowers until just before pollination, vasculature of the funiculus, and embryo.

It is found in the nucleus. Functionally, ribonuclease (RNase) III involved in RNA-mediated post-transcriptional gene silencing (PTGS). Functions in the microRNAs (miRNAs) biogenesis pathway by cleaving primary miRNAs (pri-miRNAs) and precursor miRNAs (pre-miRNAs). Functions with DRB1/HYL1 and SERRATE proteins for accurate pri-miRNAs to miRNAs processing. Indirectly involved in the production of trans-acting small interfering RNAs (ta-siRNAs) derived from the TAS1, TAS2 or TAS3 endogenous transcripts by participating in the production of their initiating miRNAs. Involved in the processing of natural siRNAs (nat-siRNAs, derived from cis-natural antisense transcripts) by cleaving 24 nucleotide nat-siRNAs into 21 nucleotide nat-siRNAs. Can produce RDR6-dependent endogenous ta-siRNAs derived from TAS1 and TAS2. Required for the production of 30-40 nucleotide bacterial-induced long siRNAs (lsiRNA). Acts redundantly with DICER-LIKE 3 (DCL3) to promote flowering via repression of FLOWERING LOCUS C (FLC). Represses antiviral RNA silencing through negative regulation of the expression of DCL4 and DCL3. The sequence is that of Endoribonuclease Dicer homolog 1 (DCL1) from Arabidopsis thaliana (Mouse-ear cress).